The sequence spans 348 residues: Dihydroorotase (348 aa).

2 residues coordinate Zn(2+): histidine 14 and histidine 16. Residues 16-18 (HLR) and asparagine 42 each bind substrate. Lysine 100, histidine 137, and histidine 175 together coordinate Zn(2+). Position 100 is an N6-carboxylysine (lysine 100). Histidine 137 is a substrate binding site. Residue leucine 220 participates in substrate binding. Aspartate 248 provides a ligand contact to Zn(2+). Aspartate 248 is an active-site residue. Substrate-binding residues include histidine 252 and alanine 264.

The protein belongs to the metallo-dependent hydrolases superfamily. DHOase family. Class II DHOase subfamily. In terms of assembly, homodimer. Requires Zn(2+) as cofactor.

The enzyme catalyses (S)-dihydroorotate + H2O = N-carbamoyl-L-aspartate + H(+). It functions in the pathway pyrimidine metabolism; UMP biosynthesis via de novo pathway; (S)-dihydroorotate from bicarbonate: step 3/3. Its function is as follows. Catalyzes the reversible cyclization of carbamoyl aspartate to dihydroorotate. The sequence is that of Dihydroorotase from Pseudomonas fluorescens (strain Pf0-1).